We begin with the raw amino-acid sequence, 297 residues long: Probable DNA polymerase III subunit delta (297 aa).

Belongs to the DNA polymerase HolA subunit family. In terms of assembly, component of the DNA clamp loading complex consisting of tau(3):delta(1):delta'(1). The DNA polymerase III holoenzyme complex contains at least 10 different subunits organized into 3 functionally essential subassemblies: the Pol III core, the beta sliding clamp processivity factor and the clamp-loading complex. The Pol III core (subunits alpha, epsilon and theta) contains the polymerase and the 3'-5' exonuclease proofreading activities. The polymerase is tethered to the template via the dimeric beta sliding clamp processivity factor. The DNA clamp-loading complex assembles the beta sliding clamp onto the primed template and plays a central role in the organization and communication at the replication fork.

The catalysed reaction is DNA(n) + a 2'-deoxyribonucleoside 5'-triphosphate = DNA(n+1) + diphosphate. Part of the beta sliding clamp loading complex, which hydrolyzes ATP to load the beta clamp onto primed DNA to form the DNA replication pre-initiation complex. DNA polymerase III is a complex, multichain enzyme responsible for most of the replicative synthesis in bacteria. This DNA polymerase also exhibits 3'-5' exonuclease activity. The delta subunit is the wrench that will open the beta subunit dimer. The DNA clamp loading complex (tau(3),delta,delta') is thought to load beta dimers onto DNA by binding ATP which alters the complex's conformation so it can bind beta sliding clamp dimers and open them at one interface. Primed DNA is recognized, ATP is hydrolyzed releasing the clamp loading complex and closing the beta sliding clamp ring around the primed DNA. The protein is Probable DNA polymerase III subunit delta of Mycoplasma genitalium (strain ATCC 33530 / DSM 19775 / NCTC 10195 / G37) (Mycoplasmoides genitalium).